A 41-amino-acid chain; its full sequence is Large ribosomal subunit protein bL36 (41 aa).

Belongs to the bacterial ribosomal protein bL36 family.

This Phenylobacterium zucineum (strain HLK1) protein is Large ribosomal subunit protein bL36.